Here is a 119-residue protein sequence, read N- to C-terminus: Large ribosomal subunit protein bL19 (119 aa).

This sequence belongs to the bacterial ribosomal protein bL19 family.

Its function is as follows. This protein is located at the 30S-50S ribosomal subunit interface and may play a role in the structure and function of the aminoacyl-tRNA binding site. The polypeptide is Large ribosomal subunit protein bL19 (Limosilactobacillus fermentum (strain NBRC 3956 / LMG 18251) (Lactobacillus fermentum)).